The chain runs to 335 residues: N-acetylmuramoyl-L-alanine amidase sle1 (335 aa).

Positions 1 to 25 are cleaved as a signal peptide; sequence MQKKVIAAIIGTSAISAVAATQANA. One can recognise a LysM 1 domain in the interval 27–70; it reads TTHTVKPGESVWAISNKYGISIAKLKSLNNLTSNLIFPNQVLKV. Over residues 71–86 the composition is skewed to low complexity; it reads SGSSNSTSNSSRPSTN. The interval 71 to 90 is disordered; the sequence is SGSSNSTSNSSRPSTNSGGG. LysM domains follow at residues 91 to 134 and 158 to 201; these read SYYT…KLKV. One can recognise a Peptidase C51 domain in the interval 211-335; sequence ASATTTNRGY…YQVNNYRYIH (125 aa).

The protein localises to the secreted. It is found in the cell surface. The catalysed reaction is Hydrolyzes the link between N-acetylmuramoyl residues and L-amino acid residues in certain cell-wall glycopeptides.. Its function is as follows. Peptidoglycan hydrolase involved in the splitting of the septum during cell division. This Staphylococcus aureus (strain bovine RF122 / ET3-1) protein is N-acetylmuramoyl-L-alanine amidase sle1 (sle1).